The following is a 132-amino-acid chain: Guanyl-specific ribonuclease C2 (132 aa).

Residues 1–26 (MLYNKLITIAALLVPALAAPQGLDVR) form the signal peptide. 2 disulfide bridges follow: cysteine 28-cysteine 36 and cysteine 32-cysteine 129. Residue histidine 66 is part of the active site. Glutamate 84 acts as the Proton acceptor in catalysis. The Proton donor role is filled by histidine 118.

This sequence belongs to the ribonuclease N1/T1 family.

It localises to the secreted. The enzyme catalyses [RNA] containing guanosine + H2O = an [RNA fragment]-3'-guanosine-3'-phosphate + a 5'-hydroxy-ribonucleotide-3'-[RNA fragment].. In Aspergillus clavatus (strain ATCC 1007 / CBS 513.65 / DSM 816 / NCTC 3887 / NRRL 1 / QM 1276 / 107), this protein is Guanyl-specific ribonuclease C2.